The primary structure comprises 133 residues: ATP synthase epsilon chain (133 aa).

This sequence belongs to the ATPase epsilon chain family. As to quaternary structure, F-type ATPases have 2 components, CF(1) - the catalytic core - and CF(0) - the membrane proton channel. CF(1) has five subunits: alpha(3), beta(3), gamma(1), delta(1), epsilon(1). CF(0) has three main subunits: a, b and c.

It is found in the cell membrane. Its function is as follows. Produces ATP from ADP in the presence of a proton gradient across the membrane. This is ATP synthase epsilon chain from Bacillus mycoides (strain KBAB4) (Bacillus weihenstephanensis).